A 73-amino-acid polypeptide reads, in one-letter code: Frenatin 3.1 (73 aa).

The first 22 residues, 1–22 (MHFLKKSIFLVLFLGLVSLSIC), serve as a signal peptide directing secretion. A propeptide spanning residues 23 to 46 (EKEKREDQNEEEVDENEEASEEKR) is cleaved from the precursor. Residues 25 to 45 (EKREDQNEEEVDENEEASEEK) are disordered. Residues 30 to 42 (QNEEEVDENEEAS) show a composition bias toward acidic residues.

As to expression, expressed by the skin glands.

Its subcellular location is the secreted. In terms of biological role, antimicrobial peptide with activity against both Gram-positive and Gram-negative bacteria. The chain is Frenatin 3.1 from Nyctimystes infrafrenatus (White-lipped tree frog).